Consider the following 156-residue polypeptide: Small ribosomal subunit protein uS7 (156 aa).

Belongs to the universal ribosomal protein uS7 family. Part of the 30S ribosomal subunit. Contacts proteins S9 and S11.

Its function is as follows. One of the primary rRNA binding proteins, it binds directly to 16S rRNA where it nucleates assembly of the head domain of the 30S subunit. Is located at the subunit interface close to the decoding center, probably blocks exit of the E-site tRNA. In Streptococcus pyogenes serotype M3 (strain ATCC BAA-595 / MGAS315), this protein is Small ribosomal subunit protein uS7.